The chain runs to 387 residues: Homoserine O-succinyltransferase (387 aa).

The AB hydrolase-1 domain maps to 45–354 (NAVLVCHALN…DAPHGHDAFL (310 aa)). Ser-151 (nucleophile) is an active-site residue. Residue Arg-221 participates in substrate binding. Active-site residues include Asp-317 and His-350. Asp-351 contacts substrate.

This sequence belongs to the AB hydrolase superfamily. MetX family. As to quaternary structure, homodimer.

The protein localises to the cytoplasm. It carries out the reaction L-homoserine + succinyl-CoA = O-succinyl-L-homoserine + CoA. Its pathway is amino-acid biosynthesis; L-methionine biosynthesis via de novo pathway; O-succinyl-L-homoserine from L-homoserine: step 1/1. Transfers a succinyl group from succinyl-CoA to L-homoserine, forming succinyl-L-homoserine. In Methylibium petroleiphilum (strain ATCC BAA-1232 / LMG 22953 / PM1), this protein is Homoserine O-succinyltransferase.